We begin with the raw amino-acid sequence, 83 residues long: uncharacterized protein (83 aa).

The chain crosses the membrane as a helical span at residues 55-75 (FGIGAAGVLGSFVTGLLIGWV).

The protein resides in the host membrane. May play a role in phage assembly. This is an uncharacterized protein from Pseudomonas phage Pf1 (Bacteriophage Pf1).